The sequence spans 427 residues: Caspase recruitment domain-containing protein 8 (427 aa).

The segment at 1 to 23 (MGIPTSSVSEEQESSEGQDSGDI) is disordered. Positions 51-186 (FLGPEGNVDV…FYAVLEKPSF (136 aa)) are ZU5. One can recognise an FIIND domain in the interval 51–336 (FLGPEGNVDV…IQLGAASAPP (286 aa)). The segment at 187–336 (SLMGILLRIA…IQLGAASAPP (150 aa)) is UPA. Positions 336-426 (PAFSGAAFVK…YLVSYLRQQS (91 aa)) constitute a CARD domain.

In terms of assembly, interacts with DPP9; leading to inhibit activation of the inflammasome. DPP9 acts via formation of a ternary complex, composed of a DPP9 homodimer, one full-length CARD8 protein, and one cleaved C-terminus of CARD8 (Caspase recruitment domain-containing protein 8, C-terminus). Interacts with DPP8; leading to inhibit activation of the inflammasome, probably via formation of a ternary complex with DPP8. Interacts with NLRP3. Interacts with IKBKG/NEMO. Interacts with DRAL. Binds to caspase-1 (CASP1), CARD16/pseudo-ICE and CARD18/ICEBERG. Interacts with NLRP2 (via NACHT domain). As to quaternary structure, interacts with the C-terminal part of CARD8 (Caspase recruitment domain-containing protein 8, C-terminus) in absence of pathogens and other damage-associated signals. Interacts with the N-terminal part of CARD8 (Caspase recruitment domain-containing protein 8, N-terminus) in absence of pathogens and other damage-associated signals. Homomultimer; forms the CARD8 inflammasome polymeric complex, a filament composed of homopolymers of this form in response to pathogens and other damage-associated signals. The CARD8 inflammasome polymeric complex directly recruits pro-caspase-1 (proCASP1) independently of PYCARD/ASC. Interacts (via CARD domain) with CASP1 (via CARD domain); leading to CASP1 activation. Undergoes autocatalytic processing within the FIIND domain to generate the N-terminal and C-terminal parts, which are associated non-covalently in absence of pathogens and other damage-associated signals. Post-translationally, ubiquitinated by the N-end rule pathway in response to pathogens and other damage-associated signals, leading to its degradation by the proteasome and subsequent release of the cleaved C-terminal part of the protein (Caspase recruitment domain-containing protein 8, C-terminus), which polymerizes and forms the CARD8 inflammasome.

The protein resides in the cytoplasm. The protein localises to the nucleus. Its subcellular location is the inflammasome. Its activity is regulated as follows. CARD8 inflammasome is inhibited by DPP8 and DPP9, which sequester the C-terminal fragment of CARD8 (Caspase recruitment domain-containing protein 8, C-terminus) in a ternary complex, thereby preventing CARD8 oligomerization and activation. CARD8 inflammasome is activated by Val-boroPro (Talabostat, PT-100), an inhibitor of dipeptidyl peptidases DPP8 and DPP9. Val-boroPro relieves inhibition of DPP8 and/or DPP9 by inducing the proteasome-mediated destruction of the N-terminal part of CARD8, releasing its C-terminal part from autoinhibition. Functionally, inflammasome sensor, which mediates inflammasome activation in response to various pathogen-associated signals, leading to subsequent pyroptosis of CD4(+) T-cells and macrophages. Inflammasomes are supramolecular complexes that assemble in the cytosol in response to pathogens and other damage-associated signals and play critical roles in innate immunity and inflammation. Acts as a recognition receptor (PRR): recognizes specific pathogens and other damage-associated signals, such as Val-boroPro inhibitor, and mediates CARD8 inflammasome activation. In response to pathogen-associated signals, the N-terminal part of CARD8 is degraded by the proteasome, releasing the cleaved C-terminal part of the protein (Caspase recruitment domain-containing protein 8, C-terminus), which polymerizes to initiate the formation of the inflammasome complex: the CARD8 inflammasome directly recruits pro-caspase-1 (proCASP1) independently of PYCARD/ASC and promotes caspase-1 (CASP1) activation, which subsequently cleaves and activates inflammatory cytokines IL1B and IL18 and gasdermin-D (GSDMD), leading to pyroptosis. Also acts as a negative regulator of the NLRP3 inflammasome. May also act as an inhibitor of NF-kappa-B activation. Constitutes the precursor of the CARD8 inflammasome, which mediates autoproteolytic processing within the FIIND domain to generate the N-terminal and C-terminal parts, which are associated non-covalently in absence of pathogens and other damage-associated signals. In terms of biological role, regulatory part that prevents formation of the CARD8 inflammasome: in absence of pathogens and other damage-associated signals, interacts with the C-terminal part of CARD8 (Caspase recruitment domain-containing protein 8, C-terminus), preventing activation of the CARD8 inflammasome. In response to pathogen-associated signals, this part is ubiquitinated by the N-end rule pathway and degraded by the proteasome, releasing the cleaved C-terminal part of the protein, which polymerizes and forms the CARD8 inflammasome. Its function is as follows. Constitutes the active part of the CARD8 inflammasome. In absence of pathogens and other damage-associated signals, interacts with the N-terminal part of CARD8 (Caspase recruitment domain-containing protein 8, N-terminus), preventing activation of the CARD8 inflammasome. In response to pathogen-associated signals, the N-terminal part of CARD8 is degraded by the proteasome, releasing this form, which polymerizes to form the CARD8 inflammasome complex: the CARD8 inflammasome complex then directly recruits pro-caspase-1 (proCASP1) and promotes caspase-1 (CASP1) activation, leading to gasdermin-D (GSDMD) cleavage and subsequent pyroptosis. This is Caspase recruitment domain-containing protein 8 from Pongo abelii (Sumatran orangutan).